We begin with the raw amino-acid sequence, 267 residues long: Tryptophan synthase alpha chain (267 aa).

Residues Glu47 and Asp58 each act as proton acceptor in the active site.

Belongs to the TrpA family. As to quaternary structure, tetramer of two alpha and two beta chains.

The enzyme catalyses (1S,2R)-1-C-(indol-3-yl)glycerol 3-phosphate + L-serine = D-glyceraldehyde 3-phosphate + L-tryptophan + H2O. The protein operates within amino-acid biosynthesis; L-tryptophan biosynthesis; L-tryptophan from chorismate: step 5/5. Functionally, the alpha subunit is responsible for the aldol cleavage of indoleglycerol phosphate to indole and glyceraldehyde 3-phosphate. This chain is Tryptophan synthase alpha chain, found in Prosthecochloris aestuarii (strain DSM 271 / SK 413).